The chain runs to 509 residues: Maturase K (509 aa).

The protein belongs to the intron maturase 2 family. MatK subfamily.

It is found in the plastid. The protein localises to the chloroplast. Functionally, usually encoded in the trnK tRNA gene intron. Probably assists in splicing its own and other chloroplast group II introns. This chain is Maturase K, found in Drimys granadensis.